Reading from the N-terminus, the 59-residue chain is MAKLEITLKRSVIGRPEDQRVTVRTLGLKKTNQTVVHEDNAAIRGMINKVSHLVSVKEQ.

This sequence belongs to the universal ribosomal protein uL30 family. In terms of assembly, part of the 50S ribosomal subunit.

This Bacillus subtilis (strain 168) protein is Large ribosomal subunit protein uL30.